The chain runs to 205 residues: Ribosomal RNA small subunit methyltransferase G (205 aa).

Residues glycine 73, leucine 78, 124–125, and arginine 138 each bind S-adenosyl-L-methionine; that span reads VE.

This sequence belongs to the methyltransferase superfamily. RNA methyltransferase RsmG family.

The protein localises to the cytoplasm. The catalysed reaction is guanosine(527) in 16S rRNA + S-adenosyl-L-methionine = N(7)-methylguanosine(527) in 16S rRNA + S-adenosyl-L-homocysteine. In terms of biological role, specifically methylates the N7 position of guanine in position 527 of 16S rRNA. In Actinobacillus pleuropneumoniae serotype 7 (strain AP76), this protein is Ribosomal RNA small subunit methyltransferase G.